The chain runs to 398 residues: Phosphoglycerate kinase (398 aa).

Substrate-binding positions include 21-23 (DFN), arginine 36, 59-62 (HLGR), arginine 119, and arginine 157. ATP-binding positions include lysine 208, glycine 296, glutamate 327, and 354 to 357 (GGDS).

This sequence belongs to the phosphoglycerate kinase family. In terms of assembly, monomer.

Its subcellular location is the cytoplasm. The catalysed reaction is (2R)-3-phosphoglycerate + ATP = (2R)-3-phospho-glyceroyl phosphate + ADP. It functions in the pathway carbohydrate degradation; glycolysis; pyruvate from D-glyceraldehyde 3-phosphate: step 2/5. The protein is Phosphoglycerate kinase of Streptococcus pneumoniae serotype 19F (strain G54).